The following is a 759-amino-acid chain: LON peptidase N-terminal domain and RING finger protein 3 (759 aa).

Positions M1–V69 are disordered. Polar residues predominate over residues E57–E66. Residues S67–V100 form a TPR 1 repeat. Residues C158–G196 form an RING-type 1 zinc finger. TPR repeat units follow at residues A243–D276, L278–G310, and K312–N344. A disordered region spans residues H360 to S454. Residues A380–D393 are compositionally biased toward basic and acidic residues. The segment at C467–K505 adopts an RING-type 2 zinc-finger fold. The 210-residue stretch at M546–S755 folds into the Lon N-terminal domain.

The protein is LON peptidase N-terminal domain and RING finger protein 3 (LONRF3) of Homo sapiens (Human).